We begin with the raw amino-acid sequence, 482 residues long: Protein nucleotidyltransferase YdiU (482 aa).

The ATP site is built by glycine 88, glycine 90, arginine 91, lysine 111, aspartate 123, glycine 124, arginine 174, and arginine 181. The active-site Proton acceptor is the aspartate 250. The Mg(2+) site is built by asparagine 251 and aspartate 260. Residue aspartate 260 coordinates ATP.

The protein belongs to the SELO family. Mg(2+) is required as a cofactor. The cofactor is Mn(2+).

It carries out the reaction L-seryl-[protein] + ATP = 3-O-(5'-adenylyl)-L-seryl-[protein] + diphosphate. The enzyme catalyses L-threonyl-[protein] + ATP = 3-O-(5'-adenylyl)-L-threonyl-[protein] + diphosphate. The catalysed reaction is L-tyrosyl-[protein] + ATP = O-(5'-adenylyl)-L-tyrosyl-[protein] + diphosphate. It catalyses the reaction L-histidyl-[protein] + UTP = N(tele)-(5'-uridylyl)-L-histidyl-[protein] + diphosphate. It carries out the reaction L-seryl-[protein] + UTP = O-(5'-uridylyl)-L-seryl-[protein] + diphosphate. The enzyme catalyses L-tyrosyl-[protein] + UTP = O-(5'-uridylyl)-L-tyrosyl-[protein] + diphosphate. Its function is as follows. Nucleotidyltransferase involved in the post-translational modification of proteins. It can catalyze the addition of adenosine monophosphate (AMP) or uridine monophosphate (UMP) to a protein, resulting in modifications known as AMPylation and UMPylation. The polypeptide is Protein nucleotidyltransferase YdiU (Cronobacter sakazakii (strain ATCC BAA-894) (Enterobacter sakazakii)).